We begin with the raw amino-acid sequence, 1086 residues long: MANLLKTVVTGCSCPLLSNLGSCKGLRVKKDFLRTFYTHQELWCKAPVKPGIPYKQLTVGVPKEIFQNEKRVALSPAGVQNLVKQGFNVVVESGAGEASKFSDDHYRVAGAQIQGAKEVLASDLVVKVRAPMVNPTLGVHEADLLKTSGTLISFIYPAQNPELLNKLSQRKTTVLAMDQVPRVTIAQGYDALSSMANIAGYKAVVLAANHFGRFFTGQITAAGKVPPAKILIVGGGVAGLASAGAAKSMGAIVRGFDTRAAALEQFKSLGAEPLEVDLKESGEGQGGYAKEMSKEFIEAEMKLFAQQCKEVDILISTALIPGKKAPVLFNKEMIESMKEGSVVVDLAAEAGGNFETTKPGELYIHKGITHIGYTDLPSRMATQASTLYSNNITKLLKAISPDKDNFYFDVKDDFDFGTMGHVIRGTVVMKDGKVIFPAPTPKNIPQGAPVKQKTVAELEAEKAATITPFRKTMSTASAYTAGLTGILGLGIAAPNLAFSQMVTTFGLAGIVGYHTVWGVTPALHSPLMSVTNAISGLTAVGGLALMGGHLYPSTTSQGLAALAAFISSVNIAGGFLVTQRMLDMFKRPTDPPEYNYLYLLPAGTFVGGYLAALYSGYNIEQIMYLGSGLCCVGALAGLSTQGTARLGNALGMIGVAGGLAATLGVLKPGPELLAQMSGAMALGGTIGLTIAKRIQISDLPQLVAAFHSLVGLAAVLTCIAEYIIEYPHFATDAAANLTKIVAYLGTYIGGVTFSGSLIAYGKLQGLLKSAPLLLPGRHLLNAGLLAASVGGIIPFMVDPSFTTGITCLGSVSALSAVMGVTLTAAIGGADMPVVITVLNSYSGWALCAEGFLLNNNLLTIVGALIGSSGAILSYIMCVAMNRSLANVILGGYGTTSTAGGKPMEISGTHTEINLDNAIDMIREANSIIITPGYGLCAAKAQYPIADLVKMLTEQGKKVRFGIHPVAGRMPGQLNVLLAEAGVPYDIVLEMDEINHDFPDTDLVLVIGANDTVNSAAQEDPNSIIAGMPVLEVWKSKQVIVMKRSLGVGYAAVDNPIFYKPNTAMLLGDAKKTCDALQAKVRESYQK.

A mitochondrion-targeting transit peptide spans 1 to 43 (MANLLKTVVTGCSCPLLSNLGSCKGLRVKKDFLRTFYTHQELW). Topologically, residues 44–474 (CKAPVKPGIP…TITPFRKTMS (431 aa)) are mitochondrial matrix. K70 is subject to N6-acetyllysine. K117 is modified (N6-succinyllysine). 182 to 184 (RVT) serves as a coordination point for NAD(+). K224 is subject to N6-succinyllysine. NAD(+) is bound by residues V237, 257-259 (DTR), and G287. The residue at position 294 (K294) is an N6-succinyllysine. NAD(+)-binding residues include E300 and L319. K331 bears the N6-succinyllysine mark. K397 is subject to N6-acetyllysine. 4 consecutive transmembrane segments (helical) span residues 475–493 (TASA…GIAA), 501–521 (MVTT…GVTP), 527–546 (LMSV…LALM), and 558–578 (GLAA…FLVT). Topologically, residues 579-595 (QRMLDMFKRPTDPPEYN) are mitochondrial matrix. Transmembrane regions (helical) follow at residues 596–616 (YLYL…LYSG), 622–642 (IMYL…STQG), 646–666 (LGNA…LGVL), 672–691 (LLAQ…LTIA), and 702–722 (LVAA…IAEY). The Cytoplasmic portion of the chain corresponds to 723–739 (IIEYPHFATDAAANLTK). 5 consecutive transmembrane segments (helical) span residues 740 to 760 (IVAY…LIAY), 778 to 797 (HLLN…PFMV), 801 to 819 (FTTG…AVMG), 833 to 853 (VVIT…GFLL), and 857 to 879 (LLTI…MCVA). Residues 880–1086 (MNRSLANVIL…QAKVRESYQK (207 aa)) are Mitochondrial matrix-facing. NADP(+) contacts are provided by residues Y933, 965–970 (VAGRMP), 1007–1011 (GANDT), 1026–1027 (GM), 1042–1049 (KRSLGVGY), and 1068–1069 (DA). The residue at position 1079 (K1079) is an N6-succinyllysine.

It in the N-terminal section; belongs to the AlaDH/PNT family. The protein in the C-terminal section; belongs to the PNT beta subunit family. Homodimer. In terms of tissue distribution, widely expressed with expression most readily detectable in adrenal, heart, kidney, thyroid and adipose tissues.

The protein localises to the mitochondrion inner membrane. The catalysed reaction is NAD(+) + NADPH + H(+)(in) = NADH + NADP(+) + H(+)(out). Its function is as follows. The transhydrogenation between NADH and NADP is coupled to respiration and ATP hydrolysis and functions as a proton pump across the membrane. May play a role in reactive oxygen species (ROS) detoxification in the adrenal gland. The sequence is that of NAD(P) transhydrogenase, mitochondrial (NNT) from Homo sapiens (Human).